Consider the following 205-residue polypeptide: Transmembrane emp24 domain-containing protein A (205 aa).

The N-terminal stretch at 1-24 is a signal peptide; it reads MMNNKLLLLVIALLCIASNSIVES. Residues 25-172 are Lumenal-facing; that stretch reads FSFKVSAKVE…RNTAESTNSR (148 aa). The GOLD domain occupies 34–116; that stretch reads EECIYEEIGV…DKTVSFILSV (83 aa). A helical transmembrane segment spans residues 173-193; it reads VLWWSVFEAFVLIALSIWQIY. Residues 194–205 are Cytoplasmic-facing; it reads YLRRFFEVKRAV.

This sequence belongs to the EMP24/GP25L family.

The protein resides in the cytoplasmic vesicle membrane. Could have a role in the budding of coatomer-coated and other species of coated vesicles. The protein is Transmembrane emp24 domain-containing protein A (empA) of Dictyostelium discoideum (Social amoeba).